The chain runs to 162 residues: Interleukin-15 (162 aa).

The signal sequence occupies residues 1–29; sequence MRILKPYLRSTSIQCYLCLLLNSHFLTEA. Positions 30 to 48 are excised as a propeptide; the sequence is GIHVFILGCISASLPKTEA. 2 cysteine pairs are disulfide-bonded: C83/C133 and C90/C136. 4 N-linked (GlcNAc...) asparagine glycosylation sites follow: N104, N113, N121, and N127.

This sequence belongs to the IL-15/IL-21 family.

The protein resides in the secreted. Its function is as follows. Cytokine that plays a major role in the development of inflammatory and protective immune responses to microbial invaders and parasites by modulating immune cells of both the innate and adaptive immune systems. Stimulates the proliferation of natural killer cells, T-cells and B-cells and promotes the secretion of several cytokines. In monocytes, induces the production of IL8 and monocyte chemotactic protein 1/CCL2, two chemokines that attract neutrophils and monocytes respectively to sites of infection. Unlike most cytokines, which are secreted in soluble form, IL15 is expressed in association with its high affinity IL15RA on the surface of IL15-producing cells and delivers signals to target cells that express IL2RB and IL2RG receptor subunits. Binding to its receptor triggers the phosphorylation of JAK1 and JAK3 and the recruitment and subsequent phosphorylation of signal transducer and activator of transcription-3/STAT3 and STAT5. In mast cells, induces the rapid tyrosine phosphorylation of STAT6 and thereby controls mast cell survival and release of cytokines such as IL4. This chain is Interleukin-15 (IL15), found in Bos taurus (Bovine).